The chain runs to 402 residues: 8-amino-7-oxononanoate synthase (402 aa).

Arginine 26 lines the substrate pocket. Position 114–115 (glycine 114–tyrosine 115) interacts with pyridoxal 5'-phosphate. Residue histidine 139 coordinates substrate. Residues serine 182, histidine 210, and threonine 239 each contribute to the pyridoxal 5'-phosphate site. The residue at position 242 (lysine 242) is an N6-(pyridoxal phosphate)lysine. Threonine 359 is a binding site for substrate.

Belongs to the class-II pyridoxal-phosphate-dependent aminotransferase family. BioF subfamily. In terms of assembly, homodimer. Pyridoxal 5'-phosphate is required as a cofactor.

The catalysed reaction is 6-carboxyhexanoyl-[ACP] + L-alanine + H(+) = (8S)-8-amino-7-oxononanoate + holo-[ACP] + CO2. It participates in cofactor biosynthesis; biotin biosynthesis. Its function is as follows. Catalyzes the decarboxylative condensation of pimeloyl-[acyl-carrier protein] and L-alanine to produce 8-amino-7-oxononanoate (AON), [acyl-carrier protein], and carbon dioxide. The polypeptide is 8-amino-7-oxononanoate synthase (Halorhodospira halophila (strain DSM 244 / SL1) (Ectothiorhodospira halophila (strain DSM 244 / SL1))).